We begin with the raw amino-acid sequence, 737 residues long: Alpha-adducin (737 aa).

Residue Met-1 is modified to N-acetylmethionine. Positions 1-21 are disordered; that stretch reads MNGDSRAAVVTSPPPTTAPHK. A Phosphoserine modification is found at Ser-12. Ser-59 bears the Phosphoserine; by PKA mark. Residue Ser-64 is modified to Phosphoserine. A Phosphothreonine modification is found at Thr-331. A phosphoserine mark is found at Ser-334, Ser-353, Ser-355, Ser-358, and Ser-366. Ser-408 is modified (phosphoserine; by PKA). Disordered stretches follow at residues 421 to 486 and 576 to 737; these read FASD…SAVP and RREV…KSDS. Residue Ser-427 is modified to Phosphoserine. At Thr-429 the chain carries Phosphothreonine. A Phosphoserine modification is found at Ser-431. Phosphoserine; by PKA is present on Ser-436. At Thr-445 the chain carries Phosphothreonine; by ROCK2. Phosphoserine is present on residues Ser-464 and Ser-465. Phosphothreonine; by ROCK2 is present on Thr-480. Ser-481 is modified (phosphoserine; by PKA). A compositionally biased stretch (basic and acidic residues) spans 576–601; it reads RREVERKQKGSEENLDEAREQKEKSP. Phosphoserine is present on residues Ser-586, Ser-600, and Ser-613. Residues 602 to 614 show a composition bias toward pro residues; that stretch reads PDQPAVPHPPPST. Thr-614 is modified (phosphothreonine). Phosphoserine occurs at positions 678, 707, 710, and 714. Residues 687–714 show a composition bias toward low complexity; sequence PVAEEAAPSAVEEGAAADPGSDGSPGKS. The span at 715-737 shows a compositional bias: basic residues; it reads PSKKKKKFRTPSFLKKSKKKSDS. Position 716 is a phosphoserine; by PKC (Ser-716). The tract at residues 717 to 734 is interaction with calmodulin; sequence KKKKKFRTPSFLKKSKKK. Position 726 is a phosphoserine; by PKA and PKC (Ser-726).

This sequence belongs to the aldolase class II family. Adducin subfamily. Heterodimer of an alpha and a beta subunit or an alpha and a gamma subunit. As to expression, expressed in all tissues. Found in much higher levels in reticulocytes than the beta subunit.

The protein resides in the cytoplasm. The protein localises to the cytoskeleton. Its subcellular location is the cell membrane. In terms of biological role, membrane-cytoskeleton-associated protein that promotes the assembly of the spectrin-actin network. Binds to calmodulin. This Homo sapiens (Human) protein is Alpha-adducin (ADD1).